The following is a 572-amino-acid chain: Hemagglutinin-neuraminidase (572 aa).

Residues 1 to 31 (MEYWKHTNHGKDAGNELETSMATHGNKLTNK) lie on the Intravirion side of the membrane. A helical membrane pass occupies residues 32 to 52 (IIYILWTIILVLLSIVFIIVL). The Virion surface portion of the chain corresponds to 53 to 572 (INSIKSEKAH…FKTEIPKSCS (520 aa)). 2 cysteine pairs are disulfide-bonded: C190/C214 and C256/C269. The segment at 252-257 (NRKSCS) is involved in neuraminidase activity. N308 and N351 each carry an N-linked (GlcNAc...) asparagine; by host glycan. Disulfide bonds link C355-C469 and C463-C473. N523 carries an N-linked (GlcNAc...) asparagine; by host glycan. Residues C535 and C544 are joined by a disulfide bond.

Belongs to the paramyxoviruses hemagglutinin-neuraminidase family. In terms of assembly, homotetramer; composed of disulfide-linked homodimers. Interacts with F protein trimer.

Its subcellular location is the virion membrane. It localises to the host cell membrane. The catalysed reaction is Hydrolysis of alpha-(2-&gt;3)-, alpha-(2-&gt;6)-, alpha-(2-&gt;8)- glycosidic linkages of terminal sialic acid residues in oligosaccharides, glycoproteins, glycolipids, colominic acid and synthetic substrates.. Its function is as follows. Attaches the virus to sialic acid-containing cell receptors and thereby initiating infection. Binding of HN protein to the receptor induces a conformational change that allows the F protein to trigger virion/cell membranes fusion. In terms of biological role, neuraminidase activity ensures the efficient spread of the virus by dissociating the mature virions from the neuraminic acid containing glycoproteins. The chain is Hemagglutinin-neuraminidase (HN) from Homo sapiens (Human).